The following is a 153-amino-acid chain: Transcriptional repressor NrdR (153 aa).

A zinc finger lies at 3 to 34; it reads CPFCNSTDTQVKDSRSIENDMLIRRRRVCLVC. Residues 49-139 enclose the ATP-cone domain; it reads FMVVKKNGET…VYMNFRNIND (91 aa).

It belongs to the NrdR family. Requires Zn(2+) as cofactor.

Negatively regulates transcription of bacterial ribonucleotide reductase nrd genes and operons by binding to NrdR-boxes. This Ehrlichia chaffeensis (strain ATCC CRL-10679 / Arkansas) protein is Transcriptional repressor NrdR.